The sequence spans 327 residues: GPI-linked NAD(P)(+)--arginine ADP-ribosyltransferase 1 (327 aa).

Positions 1-22 (MWVPAVANLLLLSLGLLEAIQA) are cleaved as a signal peptide. 2 disulfide bridges follow: Cys-53/Cys-277 and Cys-174/Cys-224. N-linked (GlcNAc...) asparagine glycosylation occurs at Asn-65. In terms of domain architecture, TR mART core spans 73 to 273 (KVYADGWALA…IYLKALGKRS (201 aa)). Tyr-121 and Arg-179 together coordinate NAD(+). Active-site residues include Arg-179 and Ser-202. Ser-233 serves as a coordination point for NAD(+). The active site involves Glu-240. N-linked (GlcNAc...) asparagine glycosylation is present at Asn-253. Residue Ser-295 is the site of GPI-anchor amidated serine attachment. Residues 296-327 (ASAQERLSTAWSLLLLLAFLAVGPFPGSPGLF) constitute a propeptide, removed in mature form.

This sequence belongs to the Arg-specific ADP-ribosyltransferase family. In terms of tissue distribution, primarily in skeletal and cardiac muscle.

It is found in the sarcoplasmic reticulum membrane. It carries out the reaction L-arginyl-[protein] + NAD(+) = N(omega)-(ADP-D-ribosyl)-L-arginyl-[protein] + nicotinamide + H(+). In terms of biological role, has ADP-ribosyltransferase activity toward GLP1R. The polypeptide is GPI-linked NAD(P)(+)--arginine ADP-ribosyltransferase 1 (ART1) (Oryctolagus cuniculus (Rabbit)).